The sequence spans 212 residues: Large ribosomal subunit protein uL3 (212 aa).

Q153 carries the post-translational modification N5-methylglutamine.

This sequence belongs to the universal ribosomal protein uL3 family. In terms of assembly, part of the 50S ribosomal subunit. Forms a cluster with proteins L14 and L19. Post-translationally, methylated by PrmB.

Its function is as follows. One of the primary rRNA binding proteins, it binds directly near the 3'-end of the 23S rRNA, where it nucleates assembly of the 50S subunit. The sequence is that of Large ribosomal subunit protein uL3 from Shewanella woodyi (strain ATCC 51908 / MS32).